The following is a 446-amino-acid chain: Histidine--tRNA ligase (446 aa).

The protein belongs to the class-II aminoacyl-tRNA synthetase family. In terms of assembly, homodimer.

It is found in the cytoplasm. The enzyme catalyses tRNA(His) + L-histidine + ATP = L-histidyl-tRNA(His) + AMP + diphosphate + H(+). In Burkholderia cenocepacia (strain ATCC BAA-245 / DSM 16553 / LMG 16656 / NCTC 13227 / J2315 / CF5610) (Burkholderia cepacia (strain J2315)), this protein is Histidine--tRNA ligase.